The primary structure comprises 554 residues: Intraflagellar transport protein 56 (554 aa).

The disordered stretch occupies residues 1 to 27 (MMLSRAKPAVGGESPHTDKRKKKGRKI). Positions 18 to 27 (DKRKKKGRKI) are enriched in basic residues. 4 TPR repeats span residues 57–90 (EDTN…ENCN), 92–125 (EVWV…LQNR), 151–184 (KEDQ…NREY), and 468–501 (ANDC…EGKR).

Belongs to the IFT56 family. Component of the IFT complex B. Interacts with IFT46; the interaction is direct.

It is found in the cell projection. The protein resides in the cilium. Functionally, component of the intraflagellar transport (IFT) complex B required for transport of proteins in the motile cilium. Required for transport of specific ciliary cargo proteins related to motility, while it is neither required for IFT complex B assembly or motion nor for cilium assembly. Required for efficient coupling between the accumulation of GLI2 and GLI3 at the ciliary tips and their dissociation from the negative regulator SUFU. Plays a key role in maintaining the integrity of the IFT complex B and the proper ciliary localization of the IFT complex B components. Not required for IFT complex A ciliary localization or function. Essential for maintaining proper microtubule organization within the ciliary axoneme. This chain is Intraflagellar transport protein 56, found in Rattus norvegicus (Rat).